The chain runs to 201 residues: Proteasome subunit beta type-2 (201 aa).

N-acetylmethionine is present on methionine 1.

This sequence belongs to the peptidase T1B family. In terms of assembly, the 26S proteasome consists of a 20S proteasome core and two 19S regulatory subunits. The 20S proteasome core is a barrel-shaped complex made of 28 subunits that are arranged in four stacked rings. The two outer rings are each formed by seven alpha subunits, and the two inner rings are formed by seven beta subunits. The proteolytic activity is exerted by three beta-subunits PSMB5, PSMB6 and PSMB7. In terms of tissue distribution, detected in liver (at protein level).

It is found in the cytoplasm. The protein localises to the nucleus. Its function is as follows. Non-catalytic component of the 20S core proteasome complex involved in the proteolytic degradation of most intracellular proteins. This complex plays numerous essential roles within the cell by associating with different regulatory particles. Associated with two 19S regulatory particles, forms the 26S proteasome and thus participates in the ATP-dependent degradation of ubiquitinated proteins. The 26S proteasome plays a key role in the maintenance of protein homeostasis by removing misfolded or damaged proteins that could impair cellular functions, and by removing proteins whose functions are no longer required. Associated with the PA200 or PA28, the 20S proteasome mediates ubiquitin-independent protein degradation. This type of proteolysis is required in several pathways including spermatogenesis (20S-PA200 complex) or generation of a subset of MHC class I-presented antigenic peptides (20S-PA28 complex). In Mus musculus (Mouse), this protein is Proteasome subunit beta type-2 (Psmb2).